An 808-amino-acid polypeptide reads, in one-letter code: Probable E3 ubiquitin-protein ligase hulA (808 aa).

One can recognise a C2 domain in the interval 1-112 (MGSNLPAQPN…QMGGDEMLTR (112 aa)). 2 disordered regions span residues 134–231 (NLST…GWER) and 275–346 (RRAH…YFVD). Polar residues-rich tracts occupy residues 142–159 (QANG…SSGL) and 171–198 (GPSQ…PSST). The segment covering 199 to 210 (VAPVNGAAAPGA) has biased composition (low complexity). Positions 211–220 (SRTNLSSFED) are enriched in polar residues. Residues 223–256 (GRLPAGWERREDNLGRTYYVDHNTRTTTWTRPSS) form the WW 1 domain. The segment covering 275–288 (RRAHQSRMLPEDRT) has biased composition (basic and acidic residues). Residues 289–303 (GASSPNLQENQQAQT) are compositionally biased toward polar residues. Over residues 317–326 (ATGATTAGTG) the composition is skewed to low complexity. 2 consecutive WW domains span residues 326–359 (GELP…DPRR) and 386–419 (GPLP…DPRL). Positions 475-808 (SASDLKKRLM…VEETLGFGQE (334 aa)) constitute an HECT domain. The active-site Glycyl thioester intermediate is the Cys-776.

The protein belongs to the RSP5/NEDD4 family. Interacts with creD.

It is found in the cytoplasm. It carries out the reaction S-ubiquitinyl-[E2 ubiquitin-conjugating enzyme]-L-cysteine + [acceptor protein]-L-lysine = [E2 ubiquitin-conjugating enzyme]-L-cysteine + N(6)-ubiquitinyl-[acceptor protein]-L-lysine.. Its pathway is protein modification; protein ubiquitination. E3 ubiquitin-protein ligase which accepts ubiquitin from an E2 ubiquitin-conjugating enzyme in the form of a thioester and then directly transfers the ubiquitin to targeted substrates. Probably involved in the regulatory network controlling carbon source utilization. The sequence is that of Probable E3 ubiquitin-protein ligase hulA (hulA) from Aspergillus terreus (strain NIH 2624 / FGSC A1156).